A 1084-amino-acid polypeptide reads, in one-letter code: Cellulose synthase A catalytic subunit 2 [UDP-forming] (1084 aa).

Met-1 carries the post-translational modification N-acetylmethionine. Residues 1 to 278 (MNTGGRLIAG…RSSRINPYRM (278 aa)) are Cytoplasmic-facing. Zn(2+) is bound by residues Cys-39, Cys-42, Cys-58, Cys-61, Cys-66, Cys-69, Cys-81, and Cys-84. Residues 39–85 (CQICGDEIELTVSSELFVACNECAFPVCRPCYEYERREGNQACPQCK) form an RING-type; degenerate zinc finger. A disordered region spans residues 230-259 (IKHEGGNNGRGSNDDDELDDPDMPMMDEGR). A helical transmembrane segment spans residues 279–299 (LILCRLAILGLFFHYRILHPV). The Extracellular segment spans residues 300-301 (ND). Residues 302 to 322 (AYGLWLTSVICEIWFAVSWIL) traverse the membrane as a helical segment. Topologically, residues 323–867 (DQFPKWYPIE…INSVVYPWTS (545 aa)) are cytoplasmic. Residues Ser-361, Lys-367, Glu-368, and Asp-397 each coordinate UDP-alpha-D-glucose. Residue Asp-397 is part of the active site. A coiled-coil region spans residues 451–477 (VRERRAMKRDYEEFKVKINALVATAQK). Residue Lys-538 coordinates UDP-alpha-D-glucose. Positions 539 and 563 each coordinate Mn(2+). The active site involves Asp-784. The chain crosses the membrane as a helical span at residues 868–888 (LPLIVYCSLPAVCLLTGKFIV). Over 889–893 (PEISN) the chain is Extracellular. Residues 894-914 (YAGILFMLMFISIAVTGILEM) traverse the membrane as a helical segment. Residues 915 to 929 (QWGGVGIDDWWRNEQ) lie on the Cytoplasmic side of the membrane. Residues 930-950 (FWVIGGASSHLFALFQGLLKV) form a helical membrane-spanning segment. Residues 951 to 979 (LAGVNTNFTVTSKAADDGAFSELYIFKWT) are Extracellular-facing. Asn-957 carries an N-linked (GlcNAc...) asparagine glycan. A helical membrane pass occupies residues 980 to 1000 (TLLIPPTTLLIINIIGVIVGV). The Cytoplasmic portion of the chain corresponds to 1001–1011 (SDAISNGYDSW). A helical membrane pass occupies residues 1012–1032 (GPLFGRLFFALWVIVHLYPFL). Residues 1033 to 1041 (KGMLGKQDK) are Extracellular-facing. A helical transmembrane segment spans residues 1042–1062 (MPTIIVVWSILLASILTLLWV). Residues 1063–1084 (RVNPFVAKGGPVLEICGLNCGN) are Cytoplasmic-facing.

Belongs to the glycosyltransferase 2 family. Plant cellulose synthase subfamily. Homodimer. Interaction through zinc finger domain. The cofactor is Mn(2+). Requires Zn(2+) as cofactor. In terms of tissue distribution, strongly and ubiquitously expressed. Localized in some dividing and expanding cells, as well as in vascular tissues.

The protein resides in the cell membrane. It catalyses the reaction [(1-&gt;4)-beta-D-glucosyl](n) + UDP-alpha-D-glucose = [(1-&gt;4)-beta-D-glucosyl](n+1) + UDP + H(+). The protein operates within glycan metabolism; plant cellulose biosynthesis. In terms of biological role, catalytic subunit of cellulose synthase terminal complexes ('rosettes'), required for beta-1,4-glucan microfibril crystallization, a major mechanism of the cell wall formation. Involved in the primary cell wall formation. In Arabidopsis thaliana (Mouse-ear cress), this protein is Cellulose synthase A catalytic subunit 2 [UDP-forming].